We begin with the raw amino-acid sequence, 533 residues long: MKQIWQALKAHQQAVEHRPILDLFADPRRAESFSTRLDDMLFDWSKTNIDHTARDLLIDLAGAAGVSQKRDAMFAGRKINETEGRAVLHTALRNMDRPVLVEGQDVAAGLRETHARMQAFAHDLREGLFTGQGGRITDVVNIGIGGSDLGPAMACLALAPYADGPRCHFVSNVDGAHIHDTLKDLDPATTLVIVASKTFTTIETMTNAETARRWMEGRVANPAAQFAAVSTAADRTAAFGIDASRVFGFEDWVGGRYSMWGPIGLSLMIAIGPEDFDAFLSGGAAMDRHFREAPFAENLPVLLALVGIWHNQICGHATRAVLPYDQRLARLPAYLQQLEMESNGKRVAMDGHELALHSGPIVWGEPGTNGQHAFYQLIHQGTRVVPCEFLVARDGHEPDLAHQHLLLVSNCLAQSEALLRGRSLDEARAILAKKGVTGTELERQARHRVFPGNRPSTTLAYPKLTPAMLGRIIALYEHRVFVEGVILGINSYDQWGVELGKELAIALQPMLEGRAGTEGKDGSTRQLIDFLGR.

Catalysis depends on E341, which acts as the Proton donor. Residues H372 and K501 contribute to the active site.

This sequence belongs to the GPI family.

The protein localises to the cytoplasm. It carries out the reaction alpha-D-glucose 6-phosphate = beta-D-fructose 6-phosphate. It participates in carbohydrate biosynthesis; gluconeogenesis. It functions in the pathway carbohydrate degradation; glycolysis; D-glyceraldehyde 3-phosphate and glycerone phosphate from D-glucose: step 2/4. In terms of biological role, catalyzes the reversible isomerization of glucose-6-phosphate to fructose-6-phosphate. This Cereibacter sphaeroides (strain ATCC 17025 / ATH 2.4.3) (Rhodobacter sphaeroides) protein is Glucose-6-phosphate isomerase.